We begin with the raw amino-acid sequence, 319 residues long: Ferrochelatase (319 aa).

2 residues coordinate Fe cation: H192 and E271.

The protein belongs to the ferrochelatase family.

The protein resides in the cytoplasm. It catalyses the reaction heme b + 2 H(+) = protoporphyrin IX + Fe(2+). It functions in the pathway porphyrin-containing compound metabolism; protoheme biosynthesis; protoheme from protoporphyrin-IX: step 1/1. Its function is as follows. Catalyzes the ferrous insertion into protoporphyrin IX. This is Ferrochelatase from Geotalea uraniireducens (strain Rf4) (Geobacter uraniireducens).